The chain runs to 513 residues: ATP synthase subunit alpha 2 (513 aa).

Residue 169–176 (GDRQTGKT) participates in ATP binding.

Belongs to the ATPase alpha/beta chains family. In terms of assembly, F-type ATPases have 2 components, CF(1) - the catalytic core - and CF(0) - the membrane proton channel. CF(1) has five subunits: alpha(3), beta(3), gamma(1), delta(1), epsilon(1). CF(0) has three main subunits: a(1), b(2) and c(9-12). The alpha and beta chains form an alternating ring which encloses part of the gamma chain. CF(1) is attached to CF(0) by a central stalk formed by the gamma and epsilon chains, while a peripheral stalk is formed by the delta and b chains.

It is found in the cell inner membrane. It carries out the reaction ATP + H2O + 4 H(+)(in) = ADP + phosphate + 5 H(+)(out). Functionally, produces ATP from ADP in the presence of a proton gradient across the membrane. The alpha chain is a regulatory subunit. The protein is ATP synthase subunit alpha 2 of Photobacterium profundum (strain SS9).